We begin with the raw amino-acid sequence, 310 residues long: Transcription initiation factor IIB (310 aa).

2 tandem repeats follow at residues 126–209 (REIT…VREL) and 220–301 (RYVS…ELVQ).

The protein belongs to the TFIIB family.

Stabilizes TBP binding to an archaeal box-A promoter. Also responsible for recruiting RNA polymerase II to the pre-initiation complex (DNA-TBP-TFIIB). In Pyrodictium occultum, this protein is Transcription initiation factor IIB.